We begin with the raw amino-acid sequence, 117 residues long: Immunoglobulin heavy variable 1-45 (117 aa).

The signal sequence occupies residues 1–19 (MDWTWRILFLVAAVTDAYS). Residues 20 to 44 (QMQLVQSGAEVKKTGSSVKVSCKAS) form a framework-1 region. An Ig-like domain is found at 20–117 (QMQLVQSGAE…EDTAMYYCAR (98 aa)). Cysteine 41 and cysteine 115 are oxidised to a cystine. The interval 45–52 (GYTFTYRY) is complementarity-determining-1. The tract at residues 53–69 (LHWVRQAPGQALEWMGW) is framework-2. A complementarity-determining-2 region spans residues 70–77 (ITPFNGNT). The interval 78 to 115 (NYAQKFQDRVTITRDRSMSTAYMELSSLRSEDTAMYYC) is framework-3. A complementarity-determining-3 region spans residues 116-117 (AR).

Immunoglobulins are composed of two identical heavy chains and two identical light chains; disulfide-linked.

The protein localises to the secreted. It localises to the cell membrane. In terms of biological role, v region of the variable domain of immunoglobulin heavy chains that participates in the antigen recognition. Immunoglobulins, also known as antibodies, are membrane-bound or secreted glycoproteins produced by B lymphocytes. In the recognition phase of humoral immunity, the membrane-bound immunoglobulins serve as receptors which, upon binding of a specific antigen, trigger the clonal expansion and differentiation of B lymphocytes into immunoglobulins-secreting plasma cells. Secreted immunoglobulins mediate the effector phase of humoral immunity, which results in the elimination of bound antigens. The antigen binding site is formed by the variable domain of one heavy chain, together with that of its associated light chain. Thus, each immunoglobulin has two antigen binding sites with remarkable affinity for a particular antigen. The variable domains are assembled by a process called V-(D)-J rearrangement and can then be subjected to somatic hypermutations which, after exposure to antigen and selection, allow affinity maturation for a particular antigen. This is Immunoglobulin heavy variable 1-45 from Homo sapiens (Human).